A 99-amino-acid chain; its full sequence is MSLLDFFLKSRKENTAKLAKERLQIIVAHERTSRSGPDYLPQLKQDILDVIRKYVQIDPEQVTVQLDKKGEQLSVLELNIMLSDDKPQNADDNTEETKS.

This sequence belongs to the MinE family.

Its function is as follows. Prevents the cell division inhibition by proteins MinC and MinD at internal division sites while permitting inhibition at polar sites. This ensures cell division at the proper site by restricting the formation of a division septum at the midpoint of the long axis of the cell. The protein is Cell division topological specificity factor of Tolumonas auensis (strain DSM 9187 / NBRC 110442 / TA 4).